A 679-amino-acid polypeptide reads, in one-letter code: Protein asunder (679 aa).

Positions 519 to 541 (RLKVNKTKDQYRLFYRELEQLIQ) form a coiled coil. The tract at residues 564-610 (GDASNKSDPSAAHLRSYTESPLSPERLEPTNSVNSSSSSILKASKRR) is disordered. Positions 604–610 (LKASKRR) match the Nuclear localization signal (NLS) motif.

It belongs to the Integrator subunit 13 family. Belongs to the multiprotein complex Integrator, at least composed of IntS1, IntS2, IntS3, IntS4, omd/IntS5, IntS6, defl/IntS7, IntS8, IntS9, IntS10, IntS11, IntS12, asun/IntS13, IntS14 and IntS15. The core complex associates with protein phosphatase 2A subunits mts/PP2A and Pp2A-29B, to form the Integrator-PP2A (INTAC) complex. In terms of processing, phosphorylated.

Its subcellular location is the nucleus. It localises to the cytoplasm. It is found in the perinuclear region. Component of the integrator complex, a multiprotein complex that terminates RNA polymerase II (Pol II) transcription in the promoter-proximal region of genes. The integrator complex provides a quality checkpoint during transcription elongation by driving premature transcription termination of transcripts that are unfavorably configured for transcriptional elongation: the complex terminates transcription by (1) catalyzing dephosphorylation of the C-terminal domain (CTD) of Pol II subunit Polr2A/Rbp1 and Spt5, and (2) degrading the exiting nascent RNA transcript via endonuclease activity. The integrator complex is also involved in the 3'-end processing of the U7 snRNA, and also the spliceosomal snRNAs U1, U2, U4 and U5. The sequence is that of Protein asunder (asun) from Drosophila mojavensis (Fruit fly).